A 756-amino-acid chain; its full sequence is NUT family member 2F (756 aa).

Disordered regions lie at residues 173 to 200 (GNARPWPQGAHGEGSLAPSQAKARPDDS), 293 to 438 (IQKS…TSDP), 511 to 639 (RAAP…LPGM), and 653 to 756 (RLSQ…HCSQ). The segment covering 304-321 (SLPPPAPPRLEPRGPPAP) has biased composition (pro residues). A compositionally biased stretch (basic and acidic residues) spans 417 to 427 (EGQREKGKVEQ). Over residues 543 to 560 (QRVSVETSPPQTAAQDPQ) the composition is skewed to polar residues. A compositionally biased stretch (low complexity) spans 654–665 (LSQSPVPSSGLL). Over residues 746-756 (SRRKKKRHCSQ) the composition is skewed to basic residues.

The protein belongs to the NUT family.

The protein is NUT family member 2F (NUTM2F) of Homo sapiens (Human).